The primary structure comprises 96 residues: Muconolactone Delta-isomerase (96 aa).

This sequence belongs to the muconolactone Delta-isomerase family. As to quaternary structure, homodecamer.

It catalyses the reaction (S)-muconolactone = (4,5-dihydro-5-oxofuran-2-yl)-acetate. It participates in aromatic compound metabolism; beta-ketoadipate pathway; 5-oxo-4,5-dihydro-2-furylacetate from catechol: step 3/3. The polypeptide is Muconolactone Delta-isomerase (catC) (Pseudomonas aeruginosa (strain ATCC 15692 / DSM 22644 / CIP 104116 / JCM 14847 / LMG 12228 / 1C / PRS 101 / PAO1)).